The primary structure comprises 393 residues: Small RNA 2'-O-methyltransferase (393 aa).

The S-adenosyl-L-methionine site is built by tyrosine 36, glycine 55, aspartate 78, lysine 83, valine 115, and isoleucine 131. 4 residues coordinate Mg(2+): glutamate 132, glutamate 135, histidine 136, and histidine 181. Residues histidine 286–serine 307 are disordered. Basic and acidic residues predominate over residues arginine 290–glycine 305.

Belongs to the methyltransferase superfamily. HEN1 family. Mg(2+) is required as a cofactor.

Its subcellular location is the cytoplasm. It carries out the reaction small RNA 3'-end nucleotide + S-adenosyl-L-methionine = small RNA 3'-end 2'-O-methylnucleotide + S-adenosyl-L-homocysteine + H(+). Methyltransferase that adds a 2'-O-methyl group at the 3'-end of piRNAs, a class of 24 to 30 nucleotide RNAs that are generated by a Dicer-independent mechanism and are primarily derived from transposons and other repeated sequence elements. This probably protects the 3'-end of piRNAs from uridylation activity and subsequent degradation. Stabilization of piRNAs is essential for gametogenesis. The sequence is that of Small RNA 2'-O-methyltransferase (HENMT1) from Homo sapiens (Human).